The sequence spans 342 residues: 4-hydroxy-2-oxovalerate aldolase (342 aa).

The Pyruvate carboxyltransferase domain occupies I7–M257. R15 to D16 provides a ligand contact to substrate. D16 serves as a coordination point for Mn(2+). H19 serves as the catalytic Proton acceptor. Positions 169 and 196 each coordinate substrate. Positions 196 and 198 each coordinate Mn(2+). Y287 is a binding site for substrate.

This sequence belongs to the 4-hydroxy-2-oxovalerate aldolase family.

It catalyses the reaction (S)-4-hydroxy-2-oxopentanoate = acetaldehyde + pyruvate. In Geobacillus thermodenitrificans (strain NG80-2), this protein is 4-hydroxy-2-oxovalerate aldolase (nbaI).